The following is a 471-amino-acid chain: Nuclear distribution protein PAC1 (471 aa).

The region spanning 9–41 (QAEELHKSMIAYLLSVNLSKSAAALREELADSV) is the LisH domain. Residues 60-87 (TSVVRLQKKIMDLESRNAALQQELDSAT) are a coiled coil. The segment covering 83–93 (LDSATPTSLSR) has biased composition (polar residues). The segment at 83 to 108 (LDSATPTSLSRRNQDPASWLPRAPAR) is disordered. WD repeat units follow at residues 113-154 (SHRG…RTIK), 156-196 (HTRA…KNIR), 200-247 (GHDH…CVKT), 250-289 (GHLD…TKST), 292-352 (GHEH…IKTL), 354-393 (GHDN…KCVR), 398-428 (AHGH…INGQ), and 429-467 (GTPS…MNVR). The segment at 424–449 (GINGQGTPSMNGVSISTTSKKEDTGG) is disordered. A compositionally biased stretch (polar residues) spans 428–441 (QGTPSMNGVSISTT).

It belongs to the WD repeat LIS1/nudF family. In terms of assembly, self-associates. Interacts with NDL1 and dynein.

Its subcellular location is the cytoplasm. The protein localises to the cytoskeleton. It localises to the spindle pole. Positively regulates the activity of the minus-end directed microtubule motor protein dynein. May enhance dynein-mediated microtubule sliding by targeting dynein to the microtubule plus end. Required for nuclear migration during vegetative growth as well as development. Required for retrograde early endosome (EE) transport from the hyphal tip. Required for localization of dynein to the mitotic spindle poles. Recruits additional proteins to the dynein complex at SPBs. This Coccidioides posadasii (strain C735) (Valley fever fungus) protein is Nuclear distribution protein PAC1.